The following is a 119-amino-acid chain: Large ribosomal subunit protein uL18 (119 aa).

The interval 1–20 (MSQIDKASRRQKIKDRSRVK) is disordered. Residues 9-20 (RRQKIKDRSRVK) show a composition bias toward basic residues.

Belongs to the universal ribosomal protein uL18 family. Part of the 50S ribosomal subunit; part of the 5S rRNA/L5/L18/L25 subcomplex. Contacts the 5S and 23S rRNAs.

Functionally, this is one of the proteins that bind and probably mediate the attachment of the 5S RNA into the large ribosomal subunit, where it forms part of the central protuberance. The polypeptide is Large ribosomal subunit protein uL18 (Chlorobium phaeobacteroides (strain DSM 266 / SMG 266 / 2430)).